Consider the following 457-residue polypeptide: G-protein coupled receptor 135 (457 aa).

The segment at 1–26 (MEEQARPPGRPAASATLQGSAHPGGA) is disordered. At 1–64 (MEEQARPPGR…EAAGSRGPAP (64 aa)) the chain is on the extracellular side. N-linked (GlcNAc...) asparagine glycosylation is present at asparagine 47. A helical membrane pass occupies residues 65–85 (LLWHGAAVAAQALVLLLIFLL). Over 86-109 (SSLGNCAVMGVIVKHRQLRTVTNA) the chain is Cytoplasmic. Residues 110-130 (FILSLSLSDLLTALLCLPAAF) form a helical membrane-spanning segment. Topologically, residues 131–156 (LDLFAPPGDSGPWRSFCAASRFFSSC) are extracellular. A helical transmembrane segment spans residues 157-177 (FGIVSTFSVALISLDRYCAIV). The Cytoplasmic segment spans residues 178 to 189 (RPPRDKLGRRRA). A helical membrane pass occupies residues 190–210 (LQLLAGAWLAALGFSLPWDLL). The Extracellular segment spans residues 211-235 (RAPREPPAPQSFHRCLYRTSPDPAQ). Residues 236–256 (LGVAYSVGLVVACYLLPFLLM) form a helical membrane-spanning segment. The Cytoplasmic portion of the chain corresponds to 257–295 (CFCRYHICKTVRLSDVRVRPMTTYARVLRFFSEVRTATT). A helical transmembrane segment spans residues 296–316 (VLIMIIFVMCCWGPYCFLVLL). The Extracellular segment spans residues 317-329 (AATRQGQATQAPS). A helical membrane pass occupies residues 330–350 (LLNVAAVWLTWANGAINPVIY). The Cytoplasmic portion of the chain corresponds to 351 to 457 (AIRNPNISML…HNSETRDSSI (107 aa)).

Belongs to the G-protein coupled receptor 1 family. In terms of assembly, interacts with MTNR1B. Interacts with ARRB1 and ARRB2 in a spontaneous and agonist-independent manner; leading to the internalization of GPR135 in the endosomal compartment.

It is found in the cell membrane. The protein resides in the endosome membrane. Orphan receptor. Has spontaneous activity for beta-arrestin recruitment. Shows a reciprocal regulatory interaction with the melatonin receptor MTNR1B most likely through receptor heteromerization. In Mus musculus (Mouse), this protein is G-protein coupled receptor 135 (Gpr135).